The chain runs to 245 residues: Vacuolar iron transporter (245 aa).

The Cytoplasmic portion of the chain corresponds to 1 to 28; sequence MGEVGESEKYLLNRHKEHHFTAGETVRD. A helical transmembrane segment spans residues 29–49; that stretch reads IIIGFSDGLTVPFALAAGLSG. The Vacuolar segment spans residues 50 to 55; sequence ANASSS. Residues 56–76 traverse the membrane as a helical segment; it reads IILTAGIAEVAAGAISMGLGG. Over 77 to 162 the chain is Cytoplasmic; it reads YLAAKSEADH…PRRALQSALT (86 aa). The Fe cation site is built by Glu94, Glu97, Glu105, Glu108, Met141, and Glu145. Residues 163–183 form a helical membrane-spanning segment; the sequence is IAISYVLSGLIPLLPYMFIPI. Residues 184–186 lie on the Vacuolar side of the membrane; sequence AQK. The helical transmembrane segment at 187-207 threads the bilayer; it reads AVVSSVIVTIFALLIFGFAKG. Residues 208–214 lie on the Cytoplasmic side of the membrane; that stretch reads YFTGNKP. Residues 215 to 235 traverse the membrane as a helical segment; it reads VWSALQTALIGAIASAAAFGM. At 236–245 the chain is on the vacuolar side; it reads AKGCASSVFE.

This sequence belongs to the CCC1 family. Expressed in petal tissues, but not in other parts of the plant, such as leaves, roots, sepals and stems.

The protein resides in the vacuole membrane. It catalyses the reaction Fe(2+)(in) = Fe(2+)(out). Vacuolar iron transporter involved in the transfer of iron ions from the cytosol to the vacuole for intracellular iron storage. Plays an essential role in the development of blue coloration in cornflower petals. In Centaurea cyanus (Garden cornflower), this protein is Vacuolar iron transporter.